Consider the following 175-residue polypeptide: Large ribosomal subunit protein bL17m (175 aa).

The N-terminal 8 residues, 1–8 (MRLSVCAA), are a transit peptide targeting the mitochondrion. The segment at 155-175 (DLSQSQEASNHSSHTAQTPGI) is disordered. Positions 157–175 (SQSQEASNHSSHTAQTPGI) are enriched in polar residues.

It belongs to the bacterial ribosomal protein bL17 family. Component of the mitochondrial ribosome large subunit (39S) which comprises a 16S rRNA and about 50 distinct proteins.

The protein resides in the mitochondrion. This is Large ribosomal subunit protein bL17m (MRPL17) from Pongo abelii (Sumatran orangutan).